A 230-amino-acid polypeptide reads, in one-letter code: Agamous-like MADS-box protein AGL11 (230 aa).

Residues 3-57 (RGKIEIKRIENSTNRQVTFCKRRNGLLKKAYELSVLCDAEVALIVFSTRGRLYEY) form the MADS-box domain. The 91-residue stretch at 87–177 (AAYYQQESAK…RTKVAEVERY (91 aa)) folds into the K-box domain. The disordered stretch occupies residues 211-230 (SGSGNGGSYSDPDKKILHLG). The span at 221–230 (DPDKKILHLG) shows a compositional bias: basic and acidic residues.

Interacts with AGL15 and AGL16.

The protein resides in the nucleus. Probable transcription factor. Is required, together with TT16/AGL32 for the maternal control of endothelium formation, which is essential for female gametophyte development and fertilization, and seed formation. In Arabidopsis thaliana (Mouse-ear cress), this protein is Agamous-like MADS-box protein AGL11 (AGL11).